A 274-amino-acid chain; its full sequence is MRKIAIYGKGGIGKSTTTQNTVAGLVEMGRKVMVVGCDPKADSTRLLLHGLAQKTVLDTLRDEGEDVELEDVMKKGFKDTSCVESGGPEPGVGCAGRGIITSINLLEQLGAYDDDKQLDYVFYDVLGDVVCGGFAMPIRDGKAQEVYIVCSGEMMAMYAANNICKSIHKFGKVGDVRLGGLICNSRKVDNEANMIGEFAKKLGTQMIHFVPRDNMVQHAEINRKTVIDYAPDHSQADEYRTLASKIDNNTMMVIPNPLSIQELEDLLIGFGIMN.

Residue 8–15 (GKGGIGKS) participates in ATP binding. Position 94 (cysteine 94) interacts with [4Fe-4S] cluster. ADP-ribosylarginine; by dinitrogenase reductase ADP-ribosyltransferase is present on arginine 97. [4Fe-4S] cluster is bound at residue cysteine 131.

This sequence belongs to the NifH/BchL/ChlL family. In terms of assembly, homodimer. [4Fe-4S] cluster serves as cofactor. In terms of processing, the reversible ADP-ribosylation of Arg-97 inactivates the nitrogenase reductase and regulates nitrogenase activity.

The enzyme catalyses N2 + 8 reduced [2Fe-2S]-[ferredoxin] + 16 ATP + 16 H2O = H2 + 8 oxidized [2Fe-2S]-[ferredoxin] + 2 NH4(+) + 16 ADP + 16 phosphate + 6 H(+). The key enzymatic reactions in nitrogen fixation are catalyzed by the nitrogenase complex, which has 2 components: the iron protein and the molybdenum-iron protein. The chain is Nitrogenase iron protein from Azobacteroides pseudotrichonymphae genomovar. CFP2.